The following is a 750-amino-acid chain: Photosystem I P700 chlorophyll a apoprotein A1 (750 aa).

The next 8 membrane-spanning stretches (helical) occupy residues 70–93 (VFSAHFGQLSIIFLWLSGMYFHGA), 156–179 (LYCTAIGALVFSALMLFAGWFHYH), 195–219 (LNHHLAGLLGLGSLSWAGHQVHVSL), 291–309 (IAHHHLAIAILFLIAGHMY), 346–369 (WHAQLSLNLAMLGSLTIVVAHHMY), 385–411 (LSLFTHHMWIGGFLIVGAAAHAAIFMV), 433–455 (AIISHLNWVCIFLGFHSFGLYIH), and 531–549 (FLVHHIHAFTIHVTVLILL). The [4Fe-4S] cluster site is built by Cys-573 and Cys-582. The next 2 helical transmembrane spans lie at 589–610 (HVFLGLFWMYNAISVVIFHFSW) and 664–686 (LSAYGLFFLGAHFVWAFSLMFLF). Residue His-675 coordinates chlorophyll a'. Met-683 and Tyr-691 together coordinate chlorophyll a. Trp-692 provides a ligand contact to phylloquinone. A helical membrane pass occupies residues 724–744 (AVGVTHYLLGGIATTWAFFLA).

This sequence belongs to the PsaA/PsaB family. The PsaA/B heterodimer binds the P700 chlorophyll special pair and subsequent electron acceptors. PSI consists of a core antenna complex that captures photons, and an electron transfer chain that converts photonic excitation into a charge separation. The eukaryotic PSI reaction center is composed of at least 11 subunits. It depends on P700 is a chlorophyll a/chlorophyll a' dimer, A0 is one or more chlorophyll a, A1 is one or both phylloquinones and FX is a shared 4Fe-4S iron-sulfur center. as a cofactor.

The protein resides in the plastid. It localises to the chloroplast thylakoid membrane. It carries out the reaction reduced [plastocyanin] + hnu + oxidized [2Fe-2S]-[ferredoxin] = oxidized [plastocyanin] + reduced [2Fe-2S]-[ferredoxin]. Functionally, psaA and PsaB bind P700, the primary electron donor of photosystem I (PSI), as well as the electron acceptors A0, A1 and FX. PSI is a plastocyanin-ferredoxin oxidoreductase, converting photonic excitation into a charge separation, which transfers an electron from the donor P700 chlorophyll pair to the spectroscopically characterized acceptors A0, A1, FX, FA and FB in turn. Oxidized P700 is reduced on the lumenal side of the thylakoid membrane by plastocyanin. The chain is Photosystem I P700 chlorophyll a apoprotein A1 from Lepidium virginicum (Virginia pepperweed).